Reading from the N-terminus, the 305-residue chain is NAD kinase 2 (305 aa).

Aspartate 78 (proton acceptor) is an active-site residue. NAD(+)-binding positions include 78-79 (DG), 152-153 (NE), aspartate 182, 193-198 (TAYSLS), and asparagine 251.

This sequence belongs to the NAD kinase family. The cofactor is a divalent metal cation.

The protein resides in the cytoplasm. The enzyme catalyses NAD(+) + ATP = ADP + NADP(+) + H(+). Its function is as follows. Involved in the regulation of the intracellular balance of NAD and NADP, and is a key enzyme in the biosynthesis of NADP. Catalyzes specifically the phosphorylation on 2'-hydroxyl of the adenosine moiety of NAD to yield NADP. Functions as a growth repressor under light-activated heterotrophic growth conditions and light and dark cycle conditions in the presence of glucose. NADP(H)/NAD(H) maintenance by slr0400 probably plays a significant role in modulating glycolysis and the TCA cycle to repress the growth rate and maintain the photosynthetic capacity. This is NAD kinase 2 from Synechocystis sp. (strain ATCC 27184 / PCC 6803 / Kazusa).